The chain runs to 455 residues: Phosphoglucosamine mutase (455 aa).

Catalysis depends on Ser108, which acts as the Phosphoserine intermediate. Mg(2+) is bound by residues Ser108, Asp246, Asp248, and Asp250. Ser108 is modified (phosphoserine).

The protein belongs to the phosphohexose mutase family. The cofactor is Mg(2+). Post-translationally, activated by phosphorylation.

It carries out the reaction alpha-D-glucosamine 1-phosphate = D-glucosamine 6-phosphate. Functionally, catalyzes the conversion of glucosamine-6-phosphate to glucosamine-1-phosphate. The polypeptide is Phosphoglucosamine mutase (Frankia casuarinae (strain DSM 45818 / CECT 9043 / HFP020203 / CcI3)).